A 554-amino-acid polypeptide reads, in one-letter code: Esterase cest-33 (554 aa).

A lipid anchor (N-myristoyl glycine) is attached at G2. Residues C76 and C98 are joined by a disulfide bond. S208 serves as the catalytic Acyl-ester intermediate. Residues E331 and H446 each act as charge relay system in the active site.

Belongs to the type-B carboxylesterase/lipase family.

It is found in the cytoplasm. Its subcellular location is the cell membrane. It carries out the reaction a carboxylic ester + H2O = an alcohol + a carboxylate + H(+). The chain is Esterase cest-33 from Caenorhabditis elegans.